A 350-amino-acid polypeptide reads, in one-letter code: tRNA uridine(34) hydroxylase (350 aa).

A Rhodanese domain is found at 146 to 240 (DDPDAVFIDM…YARRAREQGL (95 aa)). The active-site Cysteine persulfide intermediate is Cys200. The segment covering 319–328 (RRRRAGRENG) has biased composition (basic and acidic residues). A disordered region spans residues 319–350 (RRRRAGRENGNKIFNKSRGRLNSKLSIPDPAE).

It belongs to the TrhO family.

The enzyme catalyses uridine(34) in tRNA + AH2 + O2 = 5-hydroxyuridine(34) in tRNA + A + H2O. In terms of biological role, catalyzes oxygen-dependent 5-hydroxyuridine (ho5U) modification at position 34 in tRNAs. This Salmonella choleraesuis (strain SC-B67) protein is tRNA uridine(34) hydroxylase.